The following is a 747-amino-acid chain: Mediator of RNA polymerase II transcription subunit 25 (747 aa).

Residues 1-226 (MVPGSEGPAR…PRHMVLVRGL (226 aa)) form an interaction with the Mediator complex region. Disordered regions lie at residues 233–274 (GSAP…QYQV) and 299–390 (LGPR…PALG). 2 stretches are compositionally biased toward pro residues: residues 263-272 (QPLPPVPPQY) and 326-342 (PQLP…PPAS). The segment at 389–543 (LGGQQSVSNK…VNGIRQVITN (155 aa)) is interaction with VP16. Residues 395–545 (VSNKLLAWSG…GIRQVITNHK (151 aa)) are interaction with CREBBP. The segment at 548–747 (QQQKLEQQQR…MEDDILMDLI (200 aa)) is disordered. 2 interaction with RARA regions span residues 564–653 (APPG…LLNP) and 640–707 (PGAN…WPAQ). The segment covering 598 to 611 (ASGATGQPQPQGTA) has biased composition (low complexity). The span at 612–634 (QPPPGAPQGPPGAASGPPPPGPI) shows a compositional bias: pro residues. Residues 646–650 (LRSLL) carry the LXXLL motif motif. 3 stretches are compositionally biased toward pro residues: residues 652 to 664 (NPPP…PPPQ), 673 to 683 (PGAPALLPPPH), and 691 to 713 (LGPP…PRAP). Arginine 725 carries the post-translational modification Asymmetric dimethylarginine. Residues 738 to 747 (MEDDILMDLI) show a composition bias toward acidic residues.

It belongs to the Mediator complex subunit 25 family. As to quaternary structure, component of the Mediator complex, which is composed of MED1, MED4, MED6, MED7, MED8, MED9, MED10, MED11, MED12, MED13, MED13L, MED14, MED15, MED16, MED17, MED18, MED19, MED20, MED21, MED22, MED23, MED24, MED25, MED26, MED27, MED29, MED30, MED31, CCNC, CDK8 and CDC2L6/CDK11. The MED12, MED13, CCNC and CDK8 subunits form a distinct module termed the CDK8 module. Mediator containing the CDK8 module is less active than Mediator lacking this module in supporting transcriptional activation. Individual preparations of the Mediator complex lacking one or more distinct subunits have been variously termed ARC, CRSP, DRIP, PC2, SMCC and TRAP. Interacts with CREBBP. Interacts with ESR1, GR, RARA, RXRA and THRB in a ligand-dependent fashion. Binds the Herpes simplex virus activator VP16. In terms of tissue distribution, ubiquitously expressed. Highest levels in brain, heart, kidney, peripheral leukocytes, placenta, skeletal muscle and spleen.

The protein localises to the nucleus. Its function is as follows. Component of the Mediator complex, a coactivator involved in the regulated transcription of nearly all RNA polymerase II-dependent genes. Mediator functions as a bridge to convey information from gene-specific regulatory proteins to the basal RNA polymerase II transcription machinery. Mediator is recruited to promoters by direct interactions with regulatory proteins and serves as a scaffold for the assembly of a functional preinitiation complex with RNA polymerase II and the general transcription factors. Required for RARA/RXRA-mediated transcription. The protein is Mediator of RNA polymerase II transcription subunit 25 (MED25) of Homo sapiens (Human).